We begin with the raw amino-acid sequence, 110 residues long: uncharacterized protein (110 aa).

This is an uncharacterized protein from Archaeoglobus fulgidus (strain ATCC 49558 / DSM 4304 / JCM 9628 / NBRC 100126 / VC-16).